A 221-amino-acid polypeptide reads, in one-letter code: uncharacterized protein (221 aa).

The 135-residue stretch at 33–167 (RPAKSAVMLY…VSPGANLELL (135 aa)) folds into the MOSC domain.

This is an uncharacterized protein from Bacillus subtilis (strain 168).